The chain runs to 931 residues: Bifunctional uridylyltransferase/uridylyl-removing enzyme (931 aa).

A uridylyltransferase region spans residues 1–383; sequence MDSVTPNSRP…KTGNSWRRVP (383 aa). Residues 384 to 739 form a uridylyl-removing region; that stretch reads ESDDFIVDNN…VGFDPARGVT (356 aa). The HD domain occupies 499–622; sequence VDEHLIRCIG…VQSVEQMKLL (124 aa). ACT domains lie at 740 to 822 and 851 to 931; these read ELTI…AVAR and VIEV…QPAA.

This sequence belongs to the GlnD family. The cofactor is Mg(2+).

It carries out the reaction [protein-PII]-L-tyrosine + UTP = [protein-PII]-uridylyl-L-tyrosine + diphosphate. It catalyses the reaction [protein-PII]-uridylyl-L-tyrosine + H2O = [protein-PII]-L-tyrosine + UMP + H(+). Its activity is regulated as follows. Uridylyltransferase (UTase) activity is inhibited by glutamine, while glutamine activates uridylyl-removing (UR) activity. Functionally, modifies, by uridylylation and deuridylylation, the PII regulatory proteins (GlnB and homologs), in response to the nitrogen status of the cell that GlnD senses through the glutamine level. Under low glutamine levels, catalyzes the conversion of the PII proteins and UTP to PII-UMP and PPi, while under higher glutamine levels, GlnD hydrolyzes PII-UMP to PII and UMP (deuridylylation). Thus, controls uridylylation state and activity of the PII proteins, and plays an important role in the regulation of nitrogen fixation and metabolism. The sequence is that of Bifunctional uridylyltransferase/uridylyl-removing enzyme from Bradyrhizobium sp. (strain BTAi1 / ATCC BAA-1182).